We begin with the raw amino-acid sequence, 418 residues long: MYQSNKKKRLWKEEKERLLNMTRDERRKEYREYVSLDKIPSLMEELKSKASSDDESPEEIQVKNSLCEKVSFYKGDITQLEVDAIVNAANTSLLGGGGVDGCIHRASGPSLLAECRELGGCETGQAKITCGYELPAKYVIHTVGPIARGHITPNHKQDLASCYNSSLTLATENDIRTIAFPCISTGIYGYPNEPAANVALTTVKEFLKKNRDKIDRVIFCVFLEVDFKIYKRKLNEFFPKDGGDDEEGEKGDSDEMKEDTEGKPQSPPMKKIKEKKEDTPAPDSPDEEYSAEEATGNTQDMTAMSLETNEGNDVSSPATDPLKEGEELSEAKITGEKISVEPKTPEPEDAKMTVEEKSQEQEDSENMETSQPKVSGETEDLDGDSEEPSDVQKEIASPSNETCQESDPKDTNDDANEA.

A Macro domain is found at 57–238 (PEEIQVKNSL…IYKRKLNEFF (182 aa)). Substrate contacts are provided by residues 75 to 77 (GDI), 88 to 90 (AAN), 95 to 100 (GGGGVD), 183 to 189 (ISTGIYG), and Phe222. Residues 238–418 (FPKDGGDDEE…KDTNDDANEA (181 aa)) form a disordered region. The segment covering 250–262 (KGDSDEMKEDTEG) has biased composition (basic and acidic residues). Residues 295–318 (TGNTQDMTAMSLETNEGNDVSSPA) are compositionally biased toward polar residues. Over residues 321–360 (PLKEGEELSEAKITGEKISVEPKTPEPEDAKMTVEEKSQE) the composition is skewed to basic and acidic residues. Residues 377–389 (ETEDLDGDSEEPS) show a composition bias toward acidic residues.

This sequence belongs to the MacroD-type family. MacroD1/2-like subfamily.

It is found in the nucleus. It carries out the reaction 2''-O-acetyl-ADP-D-ribose + H2O = ADP-D-ribose + acetate + H(+). The enzyme catalyses 4-O-(ADP-D-ribosyl)-L-aspartyl-[protein] + H2O = L-aspartyl-[protein] + ADP-D-ribose + H(+). It catalyses the reaction 5-O-(ADP-D-ribosyl)-L-glutamyl-[protein] + H2O = L-glutamyl-[protein] + ADP-D-ribose + H(+). The catalysed reaction is alpha-NAD(+) + H2O = ADP-D-ribose + nicotinamide + H(+). With respect to regulation, subject to product inhibition by ADP-ribose. Functionally, removes ADP-ribose from aspartate and glutamate residues in proteins bearing a single ADP-ribose moiety. Inactive towards proteins bearing poly-ADP-ribose. Deacetylates O-acetyl-ADP ribose, a signaling molecule generated by the deacetylation of acetylated lysine residues in histones and other proteins. The protein is ADP-ribose glycohydrolase MACROD2 of Xenopus laevis (African clawed frog).